The following is a 170-amino-acid chain: Lipoprotein signal peptidase (170 aa).

The next 3 helical transmembrane spans lie at phenylalanine 9 to valine 29, isoleucine 72 to glutamate 92, and asparagine 94 to aspartate 114. Residues aspartate 124 and aspartate 146 contribute to the active site. A helical transmembrane segment spans residues asparagine 143–isoleucine 163.

The protein belongs to the peptidase A8 family.

The protein localises to the cell inner membrane. It carries out the reaction Release of signal peptides from bacterial membrane prolipoproteins. Hydrolyzes -Xaa-Yaa-Zaa-|-(S,diacylglyceryl)Cys-, in which Xaa is hydrophobic (preferably Leu), and Yaa (Ala or Ser) and Zaa (Gly or Ala) have small, neutral side chains.. The protein operates within protein modification; lipoprotein biosynthesis (signal peptide cleavage). In terms of biological role, this protein specifically catalyzes the removal of signal peptides from prolipoproteins. This chain is Lipoprotein signal peptidase, found in Borreliella burgdorferi (strain ATCC 35210 / DSM 4680 / CIP 102532 / B31) (Borrelia burgdorferi).